A 600-amino-acid polypeptide reads, in one-letter code: Glutamine--fructose-6-phosphate aminotransferase [isomerizing] (600 aa).

Cys-2 (nucleophile; for GATase activity) is an active-site residue. Positions 2–217 (CGIVGYIGQL…DKEMVIVTDD (216 aa)) constitute a Glutamine amidotransferase type-2 domain. SIS domains lie at 283-422 (IAAA…KNGI) and 452-590 (IARE…VDKP). Residue Lys-595 is the For Fru-6P isomerization activity of the active site.

As to quaternary structure, homodimer.

It is found in the cytoplasm. It carries out the reaction D-fructose 6-phosphate + L-glutamine = D-glucosamine 6-phosphate + L-glutamate. In terms of biological role, catalyzes the first step in hexosamine metabolism, converting fructose-6P into glucosamine-6P using glutamine as a nitrogen source. This Bacillus spizizenii (strain ATCC 23059 / NRRL B-14472 / W23) (Bacillus subtilis subsp. spizizenii) protein is Glutamine--fructose-6-phosphate aminotransferase [isomerizing] (glmS).